We begin with the raw amino-acid sequence, 231 residues long: Ribosyldihydronicotinamide dehydrogenase [quinone] (231 aa).

FAD contacts are provided by residues His-12, 18 to 21 (FNGS), and 104 to 107 (LYWF). 127 to 129 (FDI) contacts substrate. Residues 148–151 (TTGG) and Tyr-156 contribute to the FAD site. Zn(2+)-binding residues include His-174 and His-178. Asp-194 contributes to the FAD binding site. Ser-197 is subject to Phosphoserine. Position 201 (Arg-201) interacts with FAD. Cys-223 contributes to the Zn(2+) binding site.

This sequence belongs to the NAD(P)H dehydrogenase (quinone) family. In terms of assembly, homodimer. Zn(2+) is required as a cofactor. Requires FAD as cofactor.

The protein resides in the cytoplasm. The catalysed reaction is 1-(beta-D-ribofuranosyl)-1,4-dihydronicotinamide + a quinone + H(+) = beta-nicotinamide D-riboside + a quinol. Functionally, the enzyme apparently serves as a quinone reductase in connection with conjugation reactions of hydroquinones involved in detoxification pathways as well as in biosynthetic processes such as the vitamin K-dependent gamma-carboxylation of glutamate residues in prothrombin synthesis. The protein is Ribosyldihydronicotinamide dehydrogenase [quinone] (Nqo2) of Mus musculus (Mouse).